Here is a 615-residue protein sequence, read N- to C-terminus: DNA mismatch repair protein MutL (615 aa).

Positions 363-397 are disordered; it reads FAEPAAREPVAPRYTPAPASGSRPAAPWPNAQPGY. Low complexity predominate over residues 364-391; it reads AEPAAREPVAPRYTPAPASGSRPAAPWP.

This sequence belongs to the DNA mismatch repair MutL/HexB family.

In terms of biological role, this protein is involved in the repair of mismatches in DNA. It is required for dam-dependent methyl-directed DNA mismatch repair. May act as a 'molecular matchmaker', a protein that promotes the formation of a stable complex between two or more DNA-binding proteins in an ATP-dependent manner without itself being part of a final effector complex. The polypeptide is DNA mismatch repair protein MutL (Escherichia coli (strain K12 / MC4100 / BW2952)).